A 624-amino-acid polypeptide reads, in one-letter code: (-)-beta-phellandrene synthase 3, chloroplastic (624 aa).

The N-terminal 48 residues, 1–48 (MAIVSSVPLASKSCLHKSLISSIHKLKPFCRTIPTLGMSRPGKYVMPS), are a transit peptide targeting the chloroplast. D375, D379, and D527 together coordinate Mg(2+). A DDXXD motif motif is present at residues 375 to 379 (DDMYD).

This sequence belongs to the terpene synthase family. Tpsd subfamily. The cofactor is Mg(2+). Mn(2+) is required as a cofactor.

It localises to the plastid. The protein resides in the chloroplast. It carries out the reaction (2E)-geranyl diphosphate = (-)-beta-phellandrene + diphosphate. The protein operates within terpene metabolism; oleoresin biosynthesis. Terpene synthase (TPS) involved in the biosynthesis of monoterpene natural products included in conifer oleoresin secretions and volatile emissions; these compounds contribute to biotic and abiotic stress defense against herbivores and pathogens. Catalyzes the conversion of (2E)-geranyl diphosphate (GPP) to (-)-beta-phellandrene. The chain is (-)-beta-phellandrene synthase 3, chloroplastic from Picea sitchensis (Sitka spruce).